The sequence spans 197 residues: SERTA domain-containing protein 3 (197 aa).

The disordered stretch occupies residues 1-23; the sequence is MGGLKRKHSDLEEEEEEEKWDWS. Positions 27-74 constitute an SERTA domain; the sequence is LRSYQQALLRISLDKVQRSLGPRAPSLRRHVLIHNTLQQLQAAIRLAP.

As to quaternary structure, interacts with RPA2.

It is found in the nucleus. The protein resides in the nucleolus. Functionally, antiviral interferon-stimulated protein that plays a role in innate immunity and in the suppression of viruses through different mechanisms. Plays a role in the late phase response of TLR-induced immune effector expression. Strong transcriptional coactivator. This chain is SERTA domain-containing protein 3 (Sertad3), found in Mus musculus (Mouse).